Here is a 203-residue protein sequence, read N- to C-terminus: Vexin (203 aa).

The span at 59-70 (HRTDRRDGEGRW) shows a compositional bias: basic and acidic residues. The interval 59-101 (HRTDRRDGEGRWSGRFQNPRLQGPHPAKTPARPVGTSEPKSAN) is disordered.

This sequence belongs to the vexin family.

The protein resides in the cell membrane. It localises to the nucleus. Functionally, required for neurogenesis in the neural plate and retina. Strongly cooperates with neural bHLH factors to promote neurogenesis. In Bos taurus (Bovine), this protein is Vexin.